A 400-amino-acid polypeptide reads, in one-letter code: Nicotinate phosphoribosyltransferase (400 aa).

H220 carries the phosphohistidine; by autocatalysis modification.

Belongs to the NAPRTase family. Post-translationally, transiently phosphorylated on a His residue during the reaction cycle. Phosphorylation strongly increases the affinity for substrates and increases the rate of nicotinate D-ribonucleotide production. Dephosphorylation regenerates the low-affinity form of the enzyme, leading to product release.

It carries out the reaction nicotinate + 5-phospho-alpha-D-ribose 1-diphosphate + ATP + H2O = nicotinate beta-D-ribonucleotide + ADP + phosphate + diphosphate. It participates in cofactor biosynthesis; NAD(+) biosynthesis; nicotinate D-ribonucleotide from nicotinate: step 1/1. Functionally, catalyzes the synthesis of beta-nicotinate D-ribonucleotide from nicotinate and 5-phospho-D-ribose 1-phosphate at the expense of ATP. The chain is Nicotinate phosphoribosyltransferase from Salmonella heidelberg (strain SL476).